The primary structure comprises 163 residues: Protein NAG1 (163 aa).

The helical transmembrane segment at 76–96 (ACFSVRIVLPLSLTISISALM) threads the bilayer.

It is found in the membrane. Functionally, involved in yeast cell wall biogenesis. In Saccharomyces cerevisiae (strain ATCC 204508 / S288c) (Baker's yeast), this protein is Protein NAG1 (NAG1).